The primary structure comprises 291 residues: Undecaprenyl-diphosphatase (291 aa).

Helical transmembrane passes span 1-21 (MFII…LTEF), 48-68 (SAFT…AWVF), 102-122 (LHVL…DDFI), 126-146 (LFSV…MIIA), 162-182 (ISYF…WPGF), 203-223 (SDFT…LSLL), 231-251 (IADI…GLIA), and 267-287 (FAIY…GFGI).

This sequence belongs to the UppP family.

It localises to the cell membrane. It catalyses the reaction di-trans,octa-cis-undecaprenyl diphosphate + H2O = di-trans,octa-cis-undecaprenyl phosphate + phosphate + H(+). In terms of biological role, catalyzes the dephosphorylation of undecaprenyl diphosphate (UPP). Confers resistance to bacitracin. This Staphylococcus aureus (strain COL) protein is Undecaprenyl-diphosphatase.